A 235-amino-acid chain; its full sequence is Ferric nitrobindin-like protein (235 aa).

Residues 1 to 59 form a disordered region; it reads MSDLASEGSDPAERASEHSNGNAPADRPARRSGDQAVADAAERAKATGSRNIPVLPDLP. Positions 85–91 match the GXWXGXG motif; that stretch reads GVWRGEG.

Belongs to the nitrobindin family.

The polypeptide is Ferric nitrobindin-like protein (Nocardia farcinica (strain IFM 10152)).